A 953-amino-acid chain; its full sequence is MTAAENVCYTLINVPMDSEPPSEISLKNDLEKGDVKSKTEALKKVIIMILNGEKLPGLLMTIIRFVLPLQDHTIKKLLLVFWEIVPKTTPDGRLLHEMILVCDAYRKDLQHPNEFIRGSTLRFLCKLKEAELLEPLMPAIRACLEHRHSYVRRNAVLAIYTIYRNFEHLIPDAPELIHDFLVNEKDASCKRNAFMMLIHADQDRALDYLSTCIDQVQTFGDILQLVIVELIYKVCHANPSERARFIRCIYNLLQSSSPAVKYEAAGTLVTLSSAPTAIKAAAQCYIDLIIKESDNNVKLIVLDRLIELKEHPAHERVLQDLVMDILRVLSTPDLEVRKKTLQLALDLVSSRNVEELVIVLKKEVIKTNNVSEHEDTDKYRQLLVRTLHSCSVRFPDMAANVIPVLMEFLSDSNEAAAADVLEFVREAIQRFDNLRMLIVEKMLEVFHAIKSVKIYRGALWILGEYCSTKDDIQSVMTEVRRSLGEIPIVESEIKKEAGELKPEEEITVGPVQKLVTEMGTYATQSALSSSRPTKKEEERPPLRGFLLDGDFFVAASLATTLTKIALRYVALVQEKKKQNSFVAEAMLLMATILHLGKSSLPKKPITDDDVDRISLCLKVLSECSPLMNDIFNKECRQSLSHMLSAKLEEEKLSQKKESEKRNVTVQPDDPISFMQLTAKNEMNCKEDQFQLSLLAAMGNTQRKEAADPLASKLNKVTQLTGFSDPVYAEAYVHVNQYDIVLDVLVVNQTSDTLQNCTLELATLGDLKLVEKPSPLTLAPHDFANIKANVKVASTENGIIFGNIVYDVSGAASDRNCVVLSDIHIDIMDYIQPATCTDAEFRQMWAEFEWENKVTVNTNIVDLNDYLQHILKSTNMKCLTPEKALSGYCGFMAANLYARSIFGEDALANVSIEKPIQQGPEAPVTGHIRIRAKSQGMALSLGDKINLSQKKNSI.

Position 2 is an N-acetylthreonine (T2). HEAT repeat units lie at residues H96 to E131, L132 to H168, S240 to T276, A277 to H314, R316 to V353, and D396 to N433. At K494 the chain carries N6-acetyllysine.

In terms of assembly, oligomeric complex that consists of at least the alpha, beta, beta', gamma, delta, epsilon and zeta subunits. Interacts with ARF1 (myristoylated); this interaction is required for binding of COPB1 to Golgi membranes. Interacts with CAPN8 and PRKCE. Interacts with SCYL1. Interacts with COPG1. Interacts (via trunk domain) with ARF1 (via switch I region); the interaction is direct. Interacts with KCNK2 (via N-terminus); this interaction increases the channel-mediated whole cell currents and promotes plasma membrane expression of KCNK2. Interacts with STX17. Interacts with TMEM115. Interacts with TMEM41B. In terms of processing, proteolytically cleaved between Ser-528 and Ser-529 by CAPN8.

It is found in the cytoplasm. Its subcellular location is the cytosol. The protein resides in the golgi apparatus membrane. The protein localises to the cytoplasmic vesicle. It localises to the COPI-coated vesicle membrane. It is found in the cell membrane. Its subcellular location is the endoplasmic reticulum-Golgi intermediate compartment. Its function is as follows. The coatomer is a cytosolic protein complex that binds to dilysine motifs and reversibly associates with Golgi non-clathrin-coated vesicles, which further mediate biosynthetic protein transport from the ER, via the Golgi up to the trans Golgi network. Coatomer complex is required for budding from Golgi membranes, and is essential for the retrograde Golgi-to-ER transport of dilysine-tagged proteins. In mammals, the coatomer can only be recruited by membranes associated to ADP-ribosylation factors (ARFs), which are small GTP-binding proteins; the complex also influences the Golgi structural integrity, as well as the processing, activity, and endocytic recycling of LDL receptors. Involved in the Golgi disassembly and reassembly processes during cell cycle. Plays a functional role in facilitating the transport of kappa-type opioid receptor mRNAs into axons and enhances translation of these proteins. Required for limiting lipid storage in lipid droplets. Involved in lipid homeostasis by regulating the presence of perilipin family members PLIN2 and PLIN3 at the lipid droplet surface and promoting the association of adipocyte surface triglyceride lipase (PNPLA2) with the lipid droplet to mediate lipolysis. Involved in autophagy by playing a role in early endosome function. Plays a role in organellar compartmentalization of secretory compartments including endoplasmic reticulum (ER)-Golgi intermediate compartment (ERGIC), Golgi, trans-Golgi network (TGN) and recycling endosomes, and in biosynthetic transport of CAV1. The chain is Coatomer subunit beta (COPB1) from Bos taurus (Bovine).